Consider the following 131-residue polypeptide: Fumarate reductase subunit C (131 aa).

3 helical membrane-spanning segments follow: residues 30–50 (EGTAVPAVWFSIELIFGLFAL), 63–83 (FLQNPVIVIINLITLAAALLH), and 109–129 (IIKSLWAVTVVATIVILFVAL).

Belongs to the FrdC family. In terms of assembly, part of an enzyme complex containing four subunits: a flavoprotein (FrdA), an iron-sulfur protein (FrdB), and two hydrophobic anchor proteins (FrdC and FrdD).

Its subcellular location is the cell inner membrane. Two distinct, membrane-bound, FAD-containing enzymes are responsible for the catalysis of fumarate and succinate interconversion; fumarate reductase is used in anaerobic growth, and succinate dehydrogenase is used in aerobic growth. Anchors the catalytic components of the fumarate reductase complex to the cell inner membrane, binds quinones. This Shigella dysenteriae serotype 1 (strain Sd197) protein is Fumarate reductase subunit C.